The sequence spans 332 residues: MDPRSEVLLRQRHLFATPLLLAGLPADDLLAELPQAQGWSWHAGEQAQLDARFPGRSRFDTRAPTGAWTSAVLFLPKSRELTDYLLASLAARLPGGELFLVGEKRGGIERASKQLAAYGKPRKLDSARHCQLWQVRIEQAPAEPDLHALAQRYSLPLADGELQVVSLPGVFSHGRLDRGSALLLGQLQALPGGHLLDFGCGAGVLGAALKRRYPASRLTLLDVDAFAVESSRLTLAANGLDGEVIAADGIDGAPRELAAIVSNPPFHQGVHTDYQASERLLQRAAEHLAPGGELRLVANSFLKYPPLIERHLGPCRTLAEGDGFRIYSARRS.

It belongs to the methyltransferase superfamily. RsmC family. Monomer.

It localises to the cytoplasm. The enzyme catalyses guanosine(1207) in 16S rRNA + S-adenosyl-L-methionine = N(2)-methylguanosine(1207) in 16S rRNA + S-adenosyl-L-homocysteine + H(+). Functionally, specifically methylates the guanine in position 1207 of 16S rRNA in the 30S particle. This Pseudomonas aeruginosa (strain LESB58) protein is Ribosomal RNA small subunit methyltransferase C.